Here is a 486-residue protein sequence, read N- to C-terminus: N-succinylglutamate 5-semialdehyde dehydrogenase (486 aa).

220 to 225 (GSSRTG) contacts NAD(+). Residues E243 and C277 contribute to the active site.

This sequence belongs to the aldehyde dehydrogenase family. AstD subfamily.

It carries out the reaction N-succinyl-L-glutamate 5-semialdehyde + NAD(+) + H2O = N-succinyl-L-glutamate + NADH + 2 H(+). Its pathway is amino-acid degradation; L-arginine degradation via AST pathway; L-glutamate and succinate from L-arginine: step 4/5. Its function is as follows. Catalyzes the NAD-dependent reduction of succinylglutamate semialdehyde into succinylglutamate. This Shewanella piezotolerans (strain WP3 / JCM 13877) protein is N-succinylglutamate 5-semialdehyde dehydrogenase.